The sequence spans 351 residues: Phosphoribosylformylglycinamidine cyclo-ligase (351 aa).

Belongs to the AIR synthase family.

The protein localises to the cytoplasm. The catalysed reaction is 2-formamido-N(1)-(5-O-phospho-beta-D-ribosyl)acetamidine + ATP = 5-amino-1-(5-phospho-beta-D-ribosyl)imidazole + ADP + phosphate + H(+). Its pathway is purine metabolism; IMP biosynthesis via de novo pathway; 5-amino-1-(5-phospho-D-ribosyl)imidazole from N(2)-formyl-N(1)-(5-phospho-D-ribosyl)glycinamide: step 2/2. This Burkholderia ambifaria (strain ATCC BAA-244 / DSM 16087 / CCUG 44356 / LMG 19182 / AMMD) (Burkholderia cepacia (strain AMMD)) protein is Phosphoribosylformylglycinamidine cyclo-ligase.